A 1214-amino-acid polypeptide reads, in one-letter code: Transient receptor potential cation channel subfamily M member 4 (1214 aa).

The Cytoplasmic segment spans residues 1-782; it reads MVVPEKEQSW…FHFWGAPVTI (782 aa). Residues arginine 171, arginine 214, and leucine 225 each coordinate ATP. 4 residues coordinate Ca(2+): aspartate 270, alanine 392, aspartate 395, and glutamate 396. 2 residues coordinate ATP: arginine 421 and glycine 448. Residues 783–803 form a helical membrane-spanning segment; that stretch reads FMGNVVSYLLFLLLFSRVLLV. Residues 804 to 814 lie on the Extracellular side of the membrane; that stretch reads DFQPAPPGSLE. Residues 815-835 form a helical membrane-spanning segment; that stretch reads LLLYFWAFTLLCEELRQGLSG. Positions 828 and 831 each coordinate Ca(2+). The Cytoplasmic segment spans residues 836–863; sequence GGGSLASGGPGPGHASLSQRLRLYLADS. Residues 864–884 form a helical membrane-spanning segment; that stretch reads WNQCDLVALTCFLLGVGCRLT. The Ca(2+) site is built by asparagine 865 and aspartate 868. The Extracellular portion of the chain corresponds to 885 to 886; that stretch reads PG. A helical transmembrane segment spans residues 887-910; the sequence is LYHLGRTVLCIDFMVFTVRLLHIF. Residues 911-930 lie on the Cytoplasmic side of the membrane; that stretch reads TVNKQLGPKIVIVSKMMKDV. Residues 931–951 traverse the membrane as a helical segment; the sequence is FFFLFFLGVWLVAYGVATEGL. Residues 952-963 lie on the Extracellular side of the membrane; the sequence is LRPRDSDFPSIL. The pore-forming intramembrane region spans 964–984; sequence RRVFYRPYLQIFGQIPQEDMD. The Selectivity filter signature appears at 975–977; sequence FGQ. Residues 985-1019 are Extracellular-facing; it reads VALMEHSNCSSEPGFWAHPPGAQAGTCVSQYANWL. N-linked (GlcNAc...) asparagine glycosylation occurs at asparagine 992. A disulfide bond links cysteine 993 and cysteine 1011. Residues 1020–1040 form a helical membrane-spanning segment; it reads VVLLLVIFLLVANILLVNLLI. Topologically, residues 1041-1214 are cytoplasmic; it reads AMFSYTFGKV…PPPDLPGSKD (174 aa). The tract at residues 1076-1176 is calmodulin-binding; the sequence is APPFIVISHL…EYEQRLKVLE (101 aa). Residues 1134–1187 are a coiled coil; that stretch reads LARARDKRESDSERLKRTSQKVDLALKQLGHIREYEQRLKVLEREVQQCSRVLG. The mediates modulation by decavanadate and PIP2-binding stretch occupies residues 1136 to 1141; sequence RARDKR. 2 positions are modified to phosphoserine; by PKC: serine 1145 and serine 1152.

It belongs to the transient receptor (TC 1.A.4) family. LTrpC subfamily. TRPM4 sub-subfamily. As to quaternary structure, homotetramer. Phosphorylation by PKC leads to increase the sensitivity to Ca(2+). Post-translationally, sumoylated. Desumoylated by SENP1. Widely expressed with a high expression in intestine and prostate. In brain, it is both expressed in whole cerebral arteries and isolated vascular smooth muscle cells. Prominently expressed in Purkinje fibers. Expressed at higher levels in T-helper 2 (Th2) cells as compared to T-helper 1 (Th1) cells. Expressed in keratocytes.

The protein resides in the cell membrane. Its subcellular location is the endoplasmic reticulum. The protein localises to the golgi apparatus. It carries out the reaction Na(+)(in) = Na(+)(out). The enzyme catalyses K(+)(in) = K(+)(out). Displays weak voltage dependence, and repressed by decavanadate. Calmodulin-binding confers the Ca(2+) sensitivity. ATP is able to restore Ca(2+) sensitivity after desensitization. ATP inhibits channel activity. Phosphatidylinositol 4,5-bisphosphate (PIP2)-binding strongly enhances activity, by increasing the channel's Ca(2+) sensitivity and shifting its voltage dependence of activation towards negative potentials. Activity is also enhanced by 3,5-bis(trifluoromethyl)pyrazole derivative (BTP2). Exhibits pronounced temperature sensitivity, with activities strongly intensifying near physiological temperatures. Its function is as follows. Calcium-activated selective cation channel that mediates membrane depolarization. While it is activated by increase in intracellular Ca(2+), it is impermeable to it. Mediates transport of monovalent cations (Na(+) &gt; K(+) &gt; Cs(+) &gt; Li(+)), leading to depolarize the membrane. It thereby plays a central role in cadiomyocytes, neurons from entorhinal cortex, dorsal root and vomeronasal neurons, endocrine pancreas cells, kidney epithelial cells, cochlea hair cells etc. Participates in T-cell activation by modulating Ca(2+) oscillations after T lymphocyte activation, which is required for NFAT-dependent IL2 production. Involved in myogenic constriction of cerebral arteries. Controls insulin secretion in pancreatic beta-cells. May also be involved in pacemaking or could cause irregular electrical activity under conditions of Ca(2+) overload. Affects T-helper 1 (Th1) and T-helper 2 (Th2) cell motility and cytokine production through differential regulation of calcium signaling and NFATC1 localization. Enhances cell proliferation through up-regulation of the beta-catenin signaling pathway. Plays a role in keratinocyte differentiation. Functionally, lacks channel activity. This is Transient receptor potential cation channel subfamily M member 4 from Homo sapiens (Human).